Reading from the N-terminus, the 341-residue chain is Phosphoribosylformylglycinamidine cyclo-ligase (341 aa).

This sequence belongs to the AIR synthase family.

It is found in the cytoplasm. It carries out the reaction 2-formamido-N(1)-(5-O-phospho-beta-D-ribosyl)acetamidine + ATP = 5-amino-1-(5-phospho-beta-D-ribosyl)imidazole + ADP + phosphate + H(+). It participates in purine metabolism; IMP biosynthesis via de novo pathway; 5-amino-1-(5-phospho-D-ribosyl)imidazole from N(2)-formyl-N(1)-(5-phospho-D-ribosyl)glycinamide: step 2/2. This Finegoldia magna (strain ATCC 29328 / DSM 20472 / WAL 2508) (Peptostreptococcus magnus) protein is Phosphoribosylformylglycinamidine cyclo-ligase.